The sequence spans 151 residues: Large ribosomal subunit protein bL9 (151 aa).

The protein belongs to the bacterial ribosomal protein bL9 family.

Binds to the 23S rRNA. The polypeptide is Large ribosomal subunit protein bL9 (Desulforapulum autotrophicum (strain ATCC 43914 / DSM 3382 / VKM B-1955 / HRM2) (Desulfobacterium autotrophicum)).